A 311-amino-acid chain; its full sequence is tRNA-cytidine(32) 2-sulfurtransferase (311 aa).

Positions 47–52 (SGGKDS) match the PP-loop motif motif. Cys122, Cys125, and Cys213 together coordinate [4Fe-4S] cluster.

This sequence belongs to the TtcA family. In terms of assembly, homodimer. It depends on Mg(2+) as a cofactor. The cofactor is [4Fe-4S] cluster.

The protein resides in the cytoplasm. It catalyses the reaction cytidine(32) in tRNA + S-sulfanyl-L-cysteinyl-[cysteine desulfurase] + AH2 + ATP = 2-thiocytidine(32) in tRNA + L-cysteinyl-[cysteine desulfurase] + A + AMP + diphosphate + H(+). It functions in the pathway tRNA modification. Its function is as follows. Catalyzes the ATP-dependent 2-thiolation of cytidine in position 32 of tRNA, to form 2-thiocytidine (s(2)C32). The sulfur atoms are provided by the cysteine/cysteine desulfurase (IscS) system. The chain is tRNA-cytidine(32) 2-sulfurtransferase from Escherichia coli (strain K12 / MC4100 / BW2952).